A 282-amino-acid chain; its full sequence is MKLYKAKNTLSERHVQADRTADAKVPDDLWRTCPKCQRTLFAAQMDEYATCPGCGYGFRISANQRLSWLVDSAVPMDTALQTQDPLNFPGYEGKLKKAQEKSGLNDSVWTGRARIGDVDFNLGIMDPTFIMGSLGTITGEKITRLFEDATKNQRPVVLFTASGGARMQEGIMSLMQMAKVSTAIAEHDAAGLLYIVVLTDPTTGGVTASFAMEGDVILAEPRALVGFAGRRVIEQTTHTEIPADLQDAENVLKHGFIDHIVTRQDEKTTLAWLMKYGGKQND.

Positions 29 to 282 constitute a CoA carboxyltransferase N-terminal domain; that stretch reads LWRTCPKCQR…LMKYGGKQND (254 aa). Zn(2+) is bound by residues Cys-33, Cys-36, Cys-51, and Cys-54. Residues 33-54 form a C4-type zinc finger; it reads CPKCQRTLFAAQMDEYATCPGC.

The protein belongs to the AccD/PCCB family. As to quaternary structure, acetyl-CoA carboxylase is a heterohexamer composed of biotin carboxyl carrier protein (AccB), biotin carboxylase (AccC) and two subunits each of ACCase subunit alpha (AccA) and ACCase subunit beta (AccD). It depends on Zn(2+) as a cofactor.

It is found in the cytoplasm. The catalysed reaction is N(6)-carboxybiotinyl-L-lysyl-[protein] + acetyl-CoA = N(6)-biotinyl-L-lysyl-[protein] + malonyl-CoA. It functions in the pathway lipid metabolism; malonyl-CoA biosynthesis; malonyl-CoA from acetyl-CoA: step 1/1. Functionally, component of the acetyl coenzyme A carboxylase (ACC) complex. Biotin carboxylase (BC) catalyzes the carboxylation of biotin on its carrier protein (BCCP) and then the CO(2) group is transferred by the transcarboxylase to acetyl-CoA to form malonyl-CoA. The polypeptide is Acetyl-coenzyme A carboxylase carboxyl transferase subunit beta (Limosilactobacillus fermentum (strain NBRC 3956 / LMG 18251) (Lactobacillus fermentum)).